The sequence spans 291 residues: N-acetylmannosamine kinase (291 aa).

Residues 5-12 (AIDIGGTK) and 132-139 (GVGGGVVC) contribute to the ATP site. The Zn(2+) site is built by His-156, Cys-166, Cys-168, and Cys-173.

This sequence belongs to the ROK (NagC/XylR) family. NanK subfamily. In terms of assembly, homodimer.

The enzyme catalyses an N-acyl-D-mannosamine + ATP = an N-acyl-D-mannosamine 6-phosphate + ADP + H(+). Its pathway is amino-sugar metabolism; N-acetylneuraminate degradation; D-fructose 6-phosphate from N-acetylneuraminate: step 2/5. Functionally, catalyzes the phosphorylation of N-acetylmannosamine (ManNAc) to ManNAc-6-P. This Salmonella paratyphi B (strain ATCC BAA-1250 / SPB7) protein is N-acetylmannosamine kinase.